A 556-amino-acid polypeptide reads, in one-letter code: Urocanate hydratase (556 aa).

NAD(+) contacts are provided by residues 52-53 (GG), glutamine 130, 176-178 (GMG), glutamate 196, arginine 201, 242-243 (NA), 263-267 (QTSAH), 273-274 (YL), and tyrosine 322. The active site involves cysteine 410. Glycine 492 is a binding site for NAD(+).

Belongs to the urocanase family. NAD(+) is required as a cofactor.

The protein resides in the cytoplasm. It carries out the reaction 4-imidazolone-5-propanoate = trans-urocanate + H2O. It participates in amino-acid degradation; L-histidine degradation into L-glutamate; N-formimidoyl-L-glutamate from L-histidine: step 2/3. Catalyzes the conversion of urocanate to 4-imidazolone-5-propionate. In Bradyrhizobium sp. (strain BTAi1 / ATCC BAA-1182), this protein is Urocanate hydratase.